The following is a 186-amino-acid chain: Large ribosomal subunit protein uL22 (186 aa).

The disordered stretch occupies residues 160-186; the sequence is AAENEPAKKKLSKKKLQRQKEKMMRNE. Positions 177–186 are enriched in basic and acidic residues; that stretch reads RQKEKMMRNE.

This sequence belongs to the universal ribosomal protein uL22 family.

In Aedes aegypti (Yellowfever mosquito), this protein is Large ribosomal subunit protein uL22 (RpL17).